Reading from the N-terminus, the 218-residue chain is Adenylate kinase (218 aa).

10-15 (GAGKGT) serves as a coordination point for ATP. The tract at residues 30 to 59 (STGDMLRAAVKAATPLGLAAKKIMDEGGLV) is NMP. AMP contacts are provided by residues threonine 31, arginine 36, 57-59 (GLV), 85-88 (GFPR), and glutamine 92. The interval 122–159 (GRRVHLASGRTYHVTFNPPAVPDKDDLTGEPLVQRNDD) is LID. Residues arginine 123 and 132–133 (TY) contribute to the ATP site. 2 residues coordinate AMP: arginine 156 and arginine 167. Glycine 203 serves as a coordination point for ATP.

Belongs to the adenylate kinase family. In terms of assembly, monomer.

It is found in the cytoplasm. It carries out the reaction AMP + ATP = 2 ADP. It participates in purine metabolism; AMP biosynthesis via salvage pathway; AMP from ADP: step 1/1. Its function is as follows. Catalyzes the reversible transfer of the terminal phosphate group between ATP and AMP. Plays an important role in cellular energy homeostasis and in adenine nucleotide metabolism. This chain is Adenylate kinase, found in Chlorobaculum tepidum (strain ATCC 49652 / DSM 12025 / NBRC 103806 / TLS) (Chlorobium tepidum).